A 244-amino-acid chain; its full sequence is MAIKGPRKHLKRLAAPANWQLPRKERTFTVRPSPGPHSMDKSLPLLLIVRDTLKCADNAREAKKIIQMGKILIDGVKRKEYKHPVGLMDVLSIPELNENYLVLFDENGRISLKKTEKTGVKLCKIVNKTVIKGGHIQLNLHDGRNQIVKVANALKAEEDIYKTGDSVLVSLPEQAVVGHVEFNEGKLAYITGGKHVGEFAKVVEVEKRTLYSDIVTLENKDGEKFKTIKPYVFIVGQDEPVISM.

The 64-residue stretch at 43–106 (LPLLLIVRDT…NENYLVLFDE (64 aa)) folds into the S4 RNA-binding domain.

This sequence belongs to the eukaryotic ribosomal protein eS4 family.

This Methanococcus vannielii protein is Small ribosomal subunit protein eS4 (rps4e).